The primary structure comprises 350 residues: Mitogen-activated protein kinase HOG1 (350 aa).

One can recognise a Protein kinase domain in the interval 20–299; sequence YTDLQPVGMG…AAQALAHEYL (280 aa). Residues 26–34 and Lys-49 contribute to the ATP site; that span reads VGMGAFGLV. The Proton acceptor role is filled by Asp-141. A TXY motif is present at residues 171–173; that stretch reads TGY.

Belongs to the protein kinase superfamily. Ser/Thr protein kinase family. MAP kinase subfamily. HOG1 sub-subfamily. The cofactor is Mg(2+).

It is found in the cytoplasm. Its subcellular location is the nucleus. The catalysed reaction is L-seryl-[protein] + ATP = O-phospho-L-seryl-[protein] + ADP + H(+). It carries out the reaction L-threonyl-[protein] + ATP = O-phospho-L-threonyl-[protein] + ADP + H(+). Functionally, proline-directed serine/threonine-protein kinase involved in a signal transduction pathway that is activated by changes in the osmolarity of the extracellular environment. Controls osmotic regulation of transcription of target genes. Involved in environmental stress response. Via the downstream MSN2 transcription factor, may play roles in the regulation of growth, conidiation, trap development, fatty acid metabolism and secondary metabolites biosynthesis. The sequence is that of Mitogen-activated protein kinase HOG1 from Arthrobotrys oligospora (strain ATCC 24927 / CBS 115.81 / DSM 1491) (Nematode-trapping fungus).